The primary structure comprises 44 residues: Photosystem I reaction center subunit IX (44 aa).

The helical transmembrane segment at 7–27 (YLSVAPVLSTLWFGALAGLLI) threads the bilayer.

Belongs to the PsaJ family.

It localises to the plastid. It is found in the chloroplast thylakoid membrane. Its function is as follows. May help in the organization of the PsaE and PsaF subunits. This chain is Photosystem I reaction center subunit IX, found in Eucalyptus globulus subsp. globulus (Tasmanian blue gum).